A 147-amino-acid chain; its full sequence is Large ribosomal subunit protein uL15 (147 aa).

Residues Met-1–Ser-10 are compositionally biased toward polar residues. A disordered region spans residues Met-1–Arg-48. Residues Lys-11 to Gly-20 show a composition bias toward basic residues. The segment covering Arg-21–Ser-31 has biased composition (gly residues). The span at Gly-32–Arg-47 shows a compositional bias: basic residues.

This sequence belongs to the universal ribosomal protein uL15 family. As to quaternary structure, part of the 50S ribosomal subunit.

In terms of biological role, binds to the 23S rRNA. The polypeptide is Large ribosomal subunit protein uL15 (Buchnera aphidicola subsp. Baizongia pistaciae (strain Bp)).